A 724-amino-acid polypeptide reads, in one-letter code: Catalase-peroxidase (724 aa).

Residues 1–20 (MDENKTKPAGKCPVMHGGNT) form a disordered region. Positions 98-225 (WHSAGTYRTA…LAAVQMGLIY (128 aa)) form a cross-link, tryptophyl-tyrosyl-methioninium (Trp-Tyr) (with M-251). His-99 functions as the Proton acceptor in the catalytic mechanism. Positions 225–251 (YVNPEGVDGNPDPLRTAQDMRVTFSRM) form a cross-link, tryptophyl-tyrosyl-methioninium (Tyr-Met) (with W-98). Position 266 (His-266) interacts with heme b.

Belongs to the peroxidase family. Peroxidase/catalase subfamily. In terms of assembly, homodimer or homotetramer. It depends on heme b as a cofactor. In terms of processing, formation of the three residue Trp-Tyr-Met cross-link is important for the catalase, but not the peroxidase activity of the enzyme.

The catalysed reaction is H2O2 + AH2 = A + 2 H2O. The enzyme catalyses 2 H2O2 = O2 + 2 H2O. Its function is as follows. Bifunctional enzyme with both catalase and broad-spectrum peroxidase activity. The protein is Catalase-peroxidase of Pectobacterium carotovorum subsp. carotovorum (strain PC1).